The primary structure comprises 202 residues: uncharacterized protein (202 aa).

3 helical membrane-spanning segments follow: residues 34–54 (AAYV…QARI), 102–122 (MGVA…PLVI), and 125–145 (ILPL…FNKA). Residues 165-202 (NKPAAAVTGTSSNSNNASAKSDGPTITELNENETEKSS) form a disordered region. Positions 168–185 (AAAVTGTSSNSNNASAKS) are enriched in low complexity. Phosphoserine is present on residues Ser185 and Ser201.

The protein belongs to the PHO88 family.

Its subcellular location is the endoplasmic reticulum membrane. This is an uncharacterized protein from Schizosaccharomyces pombe (strain 972 / ATCC 24843) (Fission yeast).